The chain runs to 164 residues: NADH-quinone oxidoreductase subunit I (164 aa).

2 4Fe-4S ferredoxin-type domains span residues 56–85 (RRYESGEERCIACKLCEAICPAQAITIEAE) and 95–124 (TRYDIDMTKCIYCGFCQEACPVDAIVEGPN). The [4Fe-4S] cluster site is built by Cys65, Cys68, Cys71, Cys75, Cys104, Cys107, Cys110, and Cys114.

It belongs to the complex I 23 kDa subunit family. In terms of assembly, NDH-1 is composed of 14 different subunits. Subunits NuoA, H, J, K, L, M, N constitute the membrane sector of the complex. [4Fe-4S] cluster serves as cofactor.

The protein localises to the cell inner membrane. It carries out the reaction a quinone + NADH + 5 H(+)(in) = a quinol + NAD(+) + 4 H(+)(out). In terms of biological role, NDH-1 shuttles electrons from NADH, via FMN and iron-sulfur (Fe-S) centers, to quinones in the respiratory chain. The immediate electron acceptor for the enzyme in this species is believed to be ubiquinone. Couples the redox reaction to proton translocation (for every two electrons transferred, four hydrogen ions are translocated across the cytoplasmic membrane), and thus conserves the redox energy in a proton gradient. The polypeptide is NADH-quinone oxidoreductase subunit I (Anaplasma phagocytophilum (strain HZ)).